Here is a 122-residue protein sequence, read N- to C-terminus: Large ribosomal subunit protein uL14 (122 aa).

The protein belongs to the universal ribosomal protein uL14 family. In terms of assembly, part of the 50S ribosomal subunit. Forms a cluster with proteins L3 and L19. In the 70S ribosome, L14 and L19 interact and together make contacts with the 16S rRNA in bridges B5 and B8.

Its function is as follows. Binds to 23S rRNA. Forms part of two intersubunit bridges in the 70S ribosome. The protein is Large ribosomal subunit protein uL14 of Bifidobacterium longum (strain DJO10A).